A 157-amino-acid chain; its full sequence is Large ribosomal subunit protein bL20 (157 aa).

The disordered stretch occupies residues 121–157 (TSAPAVSAEAAPKAKAAKKPAAKKAAAKKPVAEEAAK). The segment covering 122 to 134 (SAPAVSAEAAPKA) has biased composition (low complexity). A compositionally biased stretch (basic residues) spans 135–147 (KAAKKPAAKKAAA).

The protein belongs to the bacterial ribosomal protein bL20 family.

In terms of biological role, binds directly to 23S ribosomal RNA and is necessary for the in vitro assembly process of the 50S ribosomal subunit. It is not involved in the protein synthesizing functions of that subunit. The chain is Large ribosomal subunit protein bL20 (rplT) from Arthrobacter sp. (strain FB24).